The chain runs to 311 residues: Vomeronasal type-1 receptor 3 (311 aa).

Topologically, residues 1–5 are extracellular; that stretch reads MASKD. A helical membrane pass occupies residues 6-26; sequence FAIGMILLSQIMVGFLGNFFL. Residues 27-51 are Cytoplasmic-facing; sequence LYHYSFLCFTRGMLQSTDLILKHLT. The chain crosses the membrane as a helical span at residues 52 to 72; that stretch reads IANSLVILSKGIPQTMAAFGL. Over 73–92 the chain is Extracellular; that stretch reads KDSLSDIGCKFVFYVHRVGR. Residues 93-113 form a helical membrane-spanning segment; the sequence is AVCVGNACLLSVFQVITISPS. Over 114-130 the chain is Cytoplasmic; that stretch reads EFRWAELKLHAHKYIRS. Residues 131-151 traverse the membrane as a helical segment; the sequence is FILVLCWILNTLVNITVLLHV. The Extracellular segment spans residues 152 to 187; the sequence is TGKWNSINSTKTNDYGYCSGGSRSRIPHSLHIVLLS. Residue Asn159 is glycosylated (N-linked (GlcNAc...) asparagine). Residues 188–208 traverse the membrane as a helical segment; sequence SLDVLCLGLMTLASGSMVFIL. Residues 209 to 232 are Cytoplasmic-facing; that stretch reads HRHKQQVQHIHGTNLSARSSPESR. A helical transmembrane segment spans residues 233-249; the sequence is VTQSILVLVSTLCYFTR. Topologically, residues 250–264 are extracellular; sequence SPPSLHMSLFPNPSW. Residues 265–285 form a helical membrane-spanning segment; that stretch reads WLLNTSALITACFPMVSPFVL. Residues 286 to 311 are Cytoplasmic-facing; that stretch reads MSRHPRIPRLGSACCGRNPQFPKLVR.

The protein belongs to the G-protein coupled receptor 1 family.

Its subcellular location is the cell membrane. Its function is as follows. Putative pheromone receptor. The chain is Vomeronasal type-1 receptor 3 (VN1R3) from Homo sapiens (Human).